The chain runs to 195 residues: ATP-dependent Clp protease proteolytic subunit (195 aa).

Ser-97 serves as the catalytic Nucleophile. His-122 is an active-site residue.

The protein belongs to the peptidase S14 family. As to quaternary structure, fourteen ClpP subunits assemble into 2 heptameric rings which stack back to back to give a disk-like structure with a central cavity, resembling the structure of eukaryotic proteasomes.

The protein localises to the cytoplasm. The enzyme catalyses Hydrolysis of proteins to small peptides in the presence of ATP and magnesium. alpha-casein is the usual test substrate. In the absence of ATP, only oligopeptides shorter than five residues are hydrolyzed (such as succinyl-Leu-Tyr-|-NHMec, and Leu-Tyr-Leu-|-Tyr-Trp, in which cleavage of the -Tyr-|-Leu- and -Tyr-|-Trp bonds also occurs).. Its function is as follows. Cleaves peptides in various proteins in a process that requires ATP hydrolysis. Has a chymotrypsin-like activity. Plays a major role in the degradation of misfolded proteins. This chain is ATP-dependent Clp protease proteolytic subunit, found in Lactobacillus gasseri (strain ATCC 33323 / DSM 20243 / BCRC 14619 / CIP 102991 / JCM 1131 / KCTC 3163 / NCIMB 11718 / NCTC 13722 / AM63).